Consider the following 281-residue polypeptide: MAKYVGAHVSASGGVENAPKNAQAIGAKAFALFTKNQRQWKAKPLSKENIEKFNEHLECCGIEKKHILPHDSYLINLGHPEEEKRQKSLEAFLDEVRRCEQLGLDKLNFHPGSHLKKISEEECLDRIADAMNETLRQSSGVTLVIENTAGQGSNLGYKFEHLRYLIDKSIDKSRVGVCLDTAHMFAAGYDIRTKEAYDKTMQAFDEIVGFEYLKGMHINDSKAKFASRVDRHHSLGKGEIGLDAFRFIMNDPRLDDIPLILETIDDTIWDKEIELLYSFVE.

H70, H110, E146, D180, H183, H217, D230, H232, and E262 together coordinate Zn(2+).

Belongs to the AP endonuclease 2 family. The cofactor is Zn(2+).

The enzyme catalyses Endonucleolytic cleavage to 5'-phosphooligonucleotide end-products.. In terms of biological role, endonuclease IV plays a role in DNA repair. It cleaves phosphodiester bonds at apurinic or apyrimidinic (AP) sites, generating a 3'-hydroxyl group and a 5'-terminal sugar phosphate. This chain is Probable endonuclease 4, found in Nitratiruptor sp. (strain SB155-2).